Consider the following 157-residue polypeptide: SUMO-conjugating enzyme UBC9 (157 aa).

S2 carries the post-translational modification N-acetylserine. One can recognise a UBC core domain in the interval 4 to 157; that stretch reads LCLQRLQEER…VLLQAKQYSK (154 aa). Residue C93 is the Glycyl thioester intermediate of the active site.

Belongs to the ubiquitin-conjugating enzyme family. Interacts with SIZ1.

It localises to the nucleus. Its pathway is protein modification; protein sumoylation. Functionally, E2 ubiquitin-like--protein ligase mediating SUMO/Smt3 attachment to septins and PCNA. Seems to be involved in degradation of S- (CLB5) and M-phase cyclins (CLB2). The chain is SUMO-conjugating enzyme UBC9 (UBC9) from Saccharomyces cerevisiae (strain ATCC 204508 / S288c) (Baker's yeast).